We begin with the raw amino-acid sequence, 121 residues long: UPF0344 protein BCA_1194 (121 aa).

The next 4 membrane-spanning stretches (helical) occupy residues 6-26 (ITAW…YSAG), 38-58 (LMYI…MKTA), 65-85 (WYGL…MVLV), and 92-112 (ATGA…YLGL).

The protein belongs to the UPF0344 family.

The protein localises to the cell membrane. This is UPF0344 protein BCA_1194 from Bacillus cereus (strain 03BB102).